The sequence spans 253 residues: Chemotaxis protein PomA (253 aa).

4 consecutive transmembrane segments (helical) span residues 6–26, 28–48, 146–166, and 180–200; these read LLGL…GGSI, MFVD…VVLM, FGDV…VAML, and AVAL…FFPI. Residues 201 to 253 lie on the Cytoplasmic side of the membrane; sequence ADKLSLRRDQETLNRRLIMDGVLAIQDGQNPRVIDSYLKNYLNEGKRALEIDE.

This sequence belongs to the MotA family. Each stator complex is composed of 4 PomA and 2 PomB subunits. 2 A subunits and 1 B subunit are thought to form a single ion channel, so that each stator complex contains two channels.

The protein localises to the cell inner membrane. In terms of biological role, pomA and PomB comprise the stator element of the flagellar motor complex. Required for rotation of the flagellar motor. Probable transmembrane proton channel. This is Chemotaxis protein PomA (pomA) from Vibrio alginolyticus.